We begin with the raw amino-acid sequence, 137 residues long: Active regulator of SIRT1 (137 aa).

Position 7 is a citrulline (Arg7). A compositionally biased stretch (low complexity) spans 14-24 (GAPEAPGAAPG). Positions 14 to 58 (GAPEAPGAAPGHTKPSQAPMKRTRKAKATQAQKLRNSAKGKVPKS) are disordered. Ser84 carries the post-translational modification Phosphoserine. Residues 96–120 (RQNRGRKACDRPVTKTKKKKKAEGT) are disordered.

It belongs to the AROS family. As to quaternary structure, part of the small subunit (SSU) processome, composed of more than 70 proteins and the RNA chaperone small nucleolar RNA (snoRNA) U3. Interacts with RPS19; the interaction is direct and mediates the integration of RPS19 in state post-A1. Interacts with SIRT1. In terms of processing, citrullinated by PADI4.

It is found in the nucleus. Its subcellular location is the nucleolus. Its function is as follows. Part of the small subunit (SSU) processome, first precursor of the small eukaryotic ribosomal subunit. During the assembly of the SSU processome in the nucleolus, many ribosome biogenesis factors, an RNA chaperone and ribosomal proteins associate with the nascent pre-rRNA and work in concert to generate RNA folding, modifications, rearrangements and cleavage as well as targeted degradation of pre-ribosomal RNA by the RNA exosome. Acts as a chaperone that specifically mediates the integration of RPS19 in state post-A1. Direct regulator of SIRT1. Enhances SIRT1-mediated deacetylation of p53/TP53, thereby participating in inhibition of p53/TP53-mediated transcriptional activity. This Bos taurus (Bovine) protein is Active regulator of SIRT1 (RPS19BP1).